Reading from the N-terminus, the 200-residue chain is Recombination protein RecR (200 aa).

The C4-type zinc-finger motif lies at cysteine 57 to cysteine 72. Residues threonine 80 to proline 175 form the Toprim domain.

This sequence belongs to the RecR family.

Its function is as follows. May play a role in DNA repair. It seems to be involved in an RecBC-independent recombinational process of DNA repair. It may act with RecF and RecO. In Pseudomonas putida (strain GB-1), this protein is Recombination protein RecR.